The following is a 188-amino-acid chain: Adenine phosphoribosyltransferase (188 aa).

The protein belongs to the purine/pyrimidine phosphoribosyltransferase family. As to quaternary structure, homodimer.

It is found in the cytoplasm. The catalysed reaction is AMP + diphosphate = 5-phospho-alpha-D-ribose 1-diphosphate + adenine. The protein operates within purine metabolism; AMP biosynthesis via salvage pathway; AMP from adenine: step 1/1. Functionally, catalyzes a salvage reaction resulting in the formation of AMP, that is energically less costly than de novo synthesis. The sequence is that of Adenine phosphoribosyltransferase from Paraburkholderia phytofirmans (strain DSM 17436 / LMG 22146 / PsJN) (Burkholderia phytofirmans).